The following is a 1293-amino-acid chain: Receptor-type tyrosine-protein phosphatase C (1293 aa).

The first 25 residues, 1-25, serve as a signal peptide directing secretion; the sequence is MTMGLWLKLLAFGFALLDTEVFVTG. Residues 26–566 lie on the Extracellular side of the membrane; that stretch reads QTPTPSDELS…RNESTNFNAK (541 aa). Residues 43–174 are disordered; that stretch reads LPQSDPLPAR…STTDISSGAS (132 aa). Composition is skewed to polar residues over residues 53–72, 88–110, and 149–169; these read TTESTPPSISERGNGSSETT, QPDSQTPSAGGADTQTFSSQADN, and LARNSSAASPTHTSNVSTTDI. An N-linked (GlcNAc...) asparagine glycan is attached at N66. N-linked (GlcNAc...) asparagine glycosylation is found at N152, N163, N209, N213, N220, N255, N260, N292, N313, N324, N349, N418, N429, N459, and N491. 2 consecutive Fibronectin type-III domains span residues 376–472 and 473–568; these read IPET…TKAD and RPDK…AKAL. Residues 567–588 traverse the membrane as a helical segment; sequence ALIIFLVFLIIVTSIALLVVLY. At 589 to 1293 the chain is on the cytoplasmic side; that stretch reads KIYDLRKKRS…SASPAPTQSS (705 aa). Tyrosine-protein phosphatase domains are found at residues 642–901 and 933–1216; these read FLAE…LVEY and LEAE…IASI. Y672 is modified (phosphotyrosine). Substrate-binding positions include D810, 842–848, and Q886; that span reads CSAGVGR. The active-site Phosphocysteine intermediate is the C842. 7 positions are modified to phosphoserine: S964, S983, S986, S990, S993, S994, and S998. The disordered stretch occupies residues 980-1003; the sequence is LEMSKESEPESDESSDDDSDSEET. Positions 988 to 1001 are enriched in acidic residues; it reads PESDESSDDDSDSE. C1157 acts as the Phosphocysteine intermediate in catalysis. At S1229 the chain carries Phosphoserine. Residues 1240 to 1293 are disordered; the sequence is DGGKQDANCVRPDGPLNKAQEDSRGVGTPEPTNSAEEPEHAANGSASPAPTQSS. The residue at position 1267 (T1267) is a Phosphothreonine. Over residues 1283 to 1293 the composition is skewed to polar residues; that stretch reads GSASPAPTQSS. Position 1286 is a phosphoserine (S1286).

It belongs to the protein-tyrosine phosphatase family. Receptor class 1/6 subfamily. Interacts with SKAP1. Interacts with DPP4; the interaction is enhanced in an interleukin-12-dependent manner in activated lymphocytes. Binds GANAB and PRKCSH. Interacts with CD53; this interaction stabilizes PTPRC on the membrane and is required for optimal phosphatase activity. Interacts with CLEC10A. Post-translationally, heavily N- and O-glycosylated.

The protein localises to the cell membrane. It localises to the membrane raft. It is found in the synapse. It carries out the reaction O-phospho-L-tyrosyl-[protein] + H2O = L-tyrosyl-[protein] + phosphate. Protein tyrosine-protein phosphatase required for T-cell activation through the antigen receptor. Acts as a positive regulator of T-cell coactivation upon binding to DPP4. The first PTPase domain has enzymatic activity, while the second one seems to affect the substrate specificity of the first one. Upon T-cell activation, recruits and dephosphorylates SKAP1 and FYN. Dephosphorylates LYN, and thereby modulates LYN activity. Interacts with CLEC10A at antigen presenting cell-T cell contact; CLEC10A on immature dendritic cells recognizes Tn antigen-carrying PTPRC/CD45 receptor on effector T cells and modulates T cell activation threshold to limit autoreactivity. The protein is Receptor-type tyrosine-protein phosphatase C of Mus musculus (Mouse).